A 251-amino-acid polypeptide reads, in one-letter code: Flap endonuclease Xni (251 aa).

D104 contacts Mg(2+). The region spanning 160–249 (VLPRQLPDYW…IDGNLQQLRL (90 aa)) is the 5'-3' exonuclease domain. K(+) contacts are provided by L171, A172, P180, V182, and I185. An interaction with DNA region spans residues 184–189 (GIGPKS).

The protein belongs to the Xni family. It depends on Mg(2+) as a cofactor. Requires K(+) as cofactor.

Its function is as follows. Has flap endonuclease activity. During DNA replication, flap endonucleases cleave the 5'-overhanging flap structure that is generated by displacement synthesis when DNA polymerase encounters the 5'-end of a downstream Okazaki fragment. In Salmonella choleraesuis (strain SC-B67), this protein is Flap endonuclease Xni.